The primary structure comprises 811 residues: uncharacterized protein (811 aa).

The segment at 16–35 (KKSTASSHPLPRTTASTSQD) is disordered. 7 consecutive transmembrane segments (helical) span residues 50-70 (IAHP…VVGY), 376-396 (WQGL…FCGV), 409-429 (HILL…DPVY), 442-462 (FYGP…SAFA), 466-486 (IVWE…MIAS), 496-516 (LLGV…YLIV), and 529-549 (LPSA…AIGV). Residues 586-734 (TFQHTLFVAC…VMLADSCEAA (149 aa)) enclose the HD domain.

The protein resides in the cell membrane. This is an uncharacterized protein from Synechocystis sp. (strain ATCC 27184 / PCC 6803 / Kazusa).